Here is a 49-residue protein sequence, read N- to C-terminus: TELSGAPLDLYQYRGQVLLIPQFTGLLYQKSQQEGDVVDGLPSHQFHQY.

The protein belongs to the glutathione peroxidase family.

It catalyses the reaction 2 glutathione + H2O2 = glutathione disulfide + 2 H2O. Inhibited by Cu(2+), SDS and DTT. Activity is slightly increased by Fe(2+), Mn(2+), triton X-100 and EDTA. Functionally, glutathione peroxidase which may protect the cell from oxidative damage. This is Glutathione peroxidase from Lactiplantibacillus plantarum (Lactobacillus plantarum).